The primary structure comprises 101 residues: MFDQTTHTEVHPLTVGKIETASGAIKPQLLRDAVKRAVTNFFAQMDGQEAEEVYEMVLSEVEAPLLDIIMQHTRGNQTRAANMLGINRGTLRKKLKKYGMN.

The H-T-H motif DNA-binding region spans 77–96 (QTRAANMLGINRGTLRKKLK).

It belongs to the transcriptional regulatory Fis family. In terms of assembly, homodimer.

In terms of biological role, activates ribosomal RNA transcription. Plays a direct role in upstream activation of rRNA promoters. This Shewanella pealeana (strain ATCC 700345 / ANG-SQ1) protein is DNA-binding protein Fis.